Here is a 158-residue protein sequence, read N- to C-terminus: Anti-tumor lectin (158 aa).

Q1 is subject to Blocked amino end (Gln). Residues 12–155 (TSVDLAAPVT…STVVEAVTYT (144 aa)) form the Galectin domain. The N-acetyl-alpha-neuraminyl-(2-&gt;3)-beta-D-galactosyl-(1-&gt;4)-beta-D-glucose site is built by N43, H59, R63, N72, R74, W80, and E83.

Homodimer. In terms of tissue distribution, detected in the fruiting body.

Its function is as follows. Anti-tumor lectin with DNase activity. Inhibits the growth of several tumor cell lines in vitro. Induces lymphocyte infiltration and necrosis of tumor cells in a mouse tumor model. Induces apoptosis in HeLa cells. Binds N-acetylneuraminyl lactose (N-acetyl-alpha-neuraminyl-(2-&gt;3)-beta-D-galactosyl-(1-&gt;4)-beta-D-glucose). The chain is Anti-tumor lectin from Cyclocybe aegerita (Black poplar mushroom).